Here is a 319-residue protein sequence, read N- to C-terminus: ATP-dependent 6-phosphofructokinase (319 aa).

Glycine 11 contributes to the ATP binding site. ADP is bound at residue 21–25; the sequence is RAVVR. ATP is bound by residues 72–73 and 102–105; these read RS and GDGS. Mg(2+) is bound at residue aspartate 103. A substrate-binding site is contributed by 125-127; sequence TID. Catalysis depends on aspartate 127, which acts as the Proton acceptor. Position 154 (arginine 154) interacts with ADP. Substrate is bound by residues arginine 162 and 169-171; that span reads MGR. ADP is bound by residues 185–187, arginine 211, and 213–215; these read GAE and KKH. Substrate contacts are provided by residues glutamate 222, arginine 243, and 249-252; that span reads HIQR.

It belongs to the phosphofructokinase type A (PFKA) family. ATP-dependent PFK group I subfamily. Prokaryotic clade 'B1' sub-subfamily. In terms of assembly, homotetramer. Mg(2+) serves as cofactor.

Its subcellular location is the cytoplasm. It carries out the reaction beta-D-fructose 6-phosphate + ATP = beta-D-fructose 1,6-bisphosphate + ADP + H(+). It functions in the pathway carbohydrate degradation; glycolysis; D-glyceraldehyde 3-phosphate and glycerone phosphate from D-glucose: step 3/4. Its activity is regulated as follows. Allosterically activated by ADP and other diphosphonucleosides, and allosterically inhibited by phosphoenolpyruvate. Its function is as follows. Catalyzes the phosphorylation of D-fructose 6-phosphate to fructose 1,6-bisphosphate by ATP, the first committing step of glycolysis. The protein is ATP-dependent 6-phosphofructokinase of Oceanobacillus iheyensis (strain DSM 14371 / CIP 107618 / JCM 11309 / KCTC 3954 / HTE831).